A 304-amino-acid chain; its full sequence is Killer cell immunoglobulin-like receptor 2DS5 (304 aa).

An N-terminal signal peptide occupies residues 1-21 (MSLMVISMACVAFFLLQGAWP). Topologically, residues 22 to 245 (HEGFRRKPSL…SETGNPRHLH (224 aa)) are extracellular. Ig-like C2-type domains lie at 42-107 (EETV…VTHS) and 142-205 (GESV…FRDS). 2 disulfide bridges follow: Cys49-Cys100 and Cys149-Cys198. Residues Asn67, Asn84, Asn178, and Asn223 are each glycosylated (N-linked (GlcNAc...) asparagine). The chain crosses the membrane as a helical span at residues 246–264 (VLIGTSVVKLPFTILLFFL). The Cytoplasmic portion of the chain corresponds to 265–304 (LHRWCSNKKNASVMDQGPAGNRTVNREDSDEQDHQEVSYA). Residues 275–304 (ASVMDQGPAGNRTVNREDSDEQDHQEVSYA) form a disordered region. Basic and acidic residues predominate over residues 288–304 (VNREDSDEQDHQEVSYA).

It belongs to the immunoglobulin superfamily. In terms of assembly, interacts with TYROBP. N-glycosylated, glycosylation varies depending on the allele which alters cell surface expression levels. As to expression, expressed on a discrete subset of peripheral blood NK cells.

The protein resides in the cell membrane. Functionally, activating natural killer (NK) receptor that recognizes C2 epitopes of HLA-C alleles. Bridging the innate and adaptive immune systems, NK cells express a number of cell surface receptors which either inhibit or stimulate their cytotoxicity. Able to activate NK cells citotoxicity and cytokine production such as IFNG. Receptor functions are attenuated even lost in some alleles, such as KIR2DS5*002 represented in this entry. This chain is Killer cell immunoglobulin-like receptor 2DS5, found in Homo sapiens (Human).